The following is a 183-amino-acid chain: Ferritin light chain 1 (183 aa).

The Ferritin-like diiron domain maps to 7 to 156; the sequence is QNYSTEVEAA…NHLTNLRRVA (150 aa). Positions 54, 57, 58, 61, and 64 each coordinate Fe cation.

It belongs to the ferritin family. As to quaternary structure, oligomer of 24 subunits. There are two types of subunits: L (light) chain and H (heavy) chain. The major chain can be light or heavy, depending on the species and tissue type. The functional molecule forms a roughly spherical shell with a diameter of 12 nm and contains a central cavity into which the insoluble mineral iron core is deposited. Interacts with NCOA4.

It localises to the cytoplasm. The protein resides in the cytoplasmic vesicle. Its subcellular location is the autophagosome. It is found in the autolysosome. Stores iron in a soluble, non-toxic, readily available form. Important for iron homeostasis. Iron is taken up in the ferrous form and deposited as ferric hydroxides after oxidation. Also plays a role in delivery of iron to cells. Mediates iron uptake in capsule cells of the developing kidney. Degraded to release iron upon autophagy activation by nutrient starvation. The chain is Ferritin light chain 1 (Ftl1) from Mus musculus (Mouse).